We begin with the raw amino-acid sequence, 545 residues long: Betaine receptor acr-23 (545 aa).

Positions 1–19 (MHRIYTFLIFISQLALGLS) are cleaved as a signal peptide. Topologically, residues 20–244 (NNPDIPIQYE…DVVIQRKPLY (225 aa)) are extracellular. N-linked (GlcNAc...) asparagine glycans are attached at residues Asn-53 and Asn-97. Disulfide bonds link Cys-157–Cys-171 and Cys-224–Cys-225. The N-linked (GlcNAc...) asparagine glycan is linked to Asn-228. The chain crosses the membrane as a helical span at residues 245–265 (YVLNLIAPTAVITFISIIGFF). Asn-276 is a glycosylation site (N-linked (GlcNAc...) asparagine). The next 2 helical transmembrane spans lie at 287–307 (EKIT…FMVS) and 317–337 (VPLI…GTLA). Over 338–512 (ASSVIFVQKL…WDWVAAVLER (175 aa)) the chain is Cytoplasmic. Residues 513-533 (VFLIFFTICFLFSAIGINLYG) form a helical membrane-spanning segment.

The protein belongs to the ligand-gated ion channel (TC 1.A.9) family. Acetylcholine receptor (TC 1.A.9.1) subfamily. In terms of tissue distribution, expressed in the body wall muscles that are arranged into four longitudinal bundles, some mechanosensory neurons, the head muscles and multiple interneurons. Not expressed in motor neurons (at protein level).

It is found in the cell membrane. Betaine receptor that functions as a ligand-gated non-selective monovalent cation channel in mechanosensory neurons to maintain basal levels of locomotion. The channel is permeable to Na(+) and K(+) but not to Ba(2+) or Ca(2+) ions. Elicits current in response to betaine, very weak current in response to choline, virtually no current in response to acetylcholine and nicotine, and no current in response to glycine and GABA. This is Betaine receptor acr-23 from Caenorhabditis elegans.